We begin with the raw amino-acid sequence, 418 residues long: Serine hydroxymethyltransferase (418 aa).

(6S)-5,6,7,8-tetrahydrofolate-binding positions include leucine 121 and 125–127; that span reads GHL. At lysine 230 the chain carries N6-(pyridoxal phosphate)lysine. 356-358 is a binding site for (6S)-5,6,7,8-tetrahydrofolate; it reads SPF.

Belongs to the SHMT family. Homodimer. Pyridoxal 5'-phosphate serves as cofactor.

It localises to the cytoplasm. It carries out the reaction (6R)-5,10-methylene-5,6,7,8-tetrahydrofolate + glycine + H2O = (6S)-5,6,7,8-tetrahydrofolate + L-serine. Its pathway is one-carbon metabolism; tetrahydrofolate interconversion. The protein operates within amino-acid biosynthesis; glycine biosynthesis; glycine from L-serine: step 1/1. Its function is as follows. Catalyzes the reversible interconversion of serine and glycine with tetrahydrofolate (THF) serving as the one-carbon carrier. This reaction serves as the major source of one-carbon groups required for the biosynthesis of purines, thymidylate, methionine, and other important biomolecules. Also exhibits THF-independent aldolase activity toward beta-hydroxyamino acids, producing glycine and aldehydes, via a retro-aldol mechanism. In Shewanella piezotolerans (strain WP3 / JCM 13877), this protein is Serine hydroxymethyltransferase.